The sequence spans 156 residues: UPF0232 protein BL0636 (156 aa).

The protein belongs to the UPF0232 family.

The sequence is that of UPF0232 protein BL0636 from Bifidobacterium longum (strain NCC 2705).